The sequence spans 699 residues: Protein Scribble homolog let-413 (699 aa).

LRR repeat units lie at residues 37 to 59 (KLED…FSLR), 60 to 81 (HLRI…IGNL), 83 to 104 (QLIE…MQNC), 106 to 127 (LLTT…ICEC), 129 to 150 (SITI…IGSL), 152 to 174 (NLRV…VELR), 175 to 196 (KLEE…IGKL), 198 to 219 (SLRE…ISGC), 221 to 242 (MLDQ…LGRM), 244 to 265 (NLTD…FGEL), 267 to 288 (RLQM…IGKC), 290 to 311 (SLTE…IGDL), 313 to 334 (QLTT…IGNC), 336 to 357 (SLTV…IGKC), 359 to 380 (NLTV…VKVL), and 382 to 403 (KLQA…SETR). A PDZ domain is found at 584–665 (AGGTSNDPAP…RSPSPVSRTS (82 aa)). The tract at residues 656–699 (RSPSPVSRTSEPSLNGSSHQLNHFDAGSPDSTMFVTSSTPVYAS) is disordered. 2 stretches are compositionally biased toward polar residues: residues 659–676 (SPVS…SHQL) and 684–699 (PDST…VYAS).

Belongs to the LAP (LRR and PDZ) protein family. In terms of tissue distribution, expressed in the terminal web of the intestine. Expressed in seam cells. Expressed in the basolateral surfaces of epithelia and the nervous system. Expressed in the intestine, epidermis, excretory canal, reproductive system including vulva, uterus and spermatheca, in both larval and adult stage animals.

Its subcellular location is the basolateral cell membrane. Critical role in assembling adherens junctions; adapter protein involved in polarizing protein trafficking in epithelial cells. Necessary to maintain, not establish, the entire terminal web (organelle-depleted, intermediate filament-rich layer of cytoplasm that underlies the apical microvilli of polarized epithelial cells) or brush border assembly at the apical surface gut cells. Required for correct localization of ifb-2 intermediate filaments in the terminal web. Required for dlg-1 and hmr-1 lateral localization. Maintains cell polarity by correctly positioning adherens junction protein components including ajm-1 and hmp-1 at discrete subapical positions. Plays a role in the correct localization of the dlg-1-ajm-1 complex, polarity protein par-3, and actin microfilament to the apical junction of spermatheca cells, and is required for ovulation. Regulates the establishment of newly-formed epithelia in conjunction with dlg-1. Required in the epidermis during larval development. Plays a role in cellular junction integrity and in the directed outgrowth of seam cells, towards neighboring seam cells, during larval development; probably acts by promoting the assembly and stability of dlg-1 at apical junctions. The protein is Protein Scribble homolog let-413 of Caenorhabditis elegans.